The sequence spans 95 residues: Aspartyl/glutamyl-tRNA(Asn/Gln) amidotransferase subunit C (95 aa).

The protein belongs to the GatC family. In terms of assembly, heterotrimer of A, B and C subunits.

It carries out the reaction L-glutamyl-tRNA(Gln) + L-glutamine + ATP + H2O = L-glutaminyl-tRNA(Gln) + L-glutamate + ADP + phosphate + H(+). The enzyme catalyses L-aspartyl-tRNA(Asn) + L-glutamine + ATP + H2O = L-asparaginyl-tRNA(Asn) + L-glutamate + ADP + phosphate + 2 H(+). Its function is as follows. Allows the formation of correctly charged Asn-tRNA(Asn) or Gln-tRNA(Gln) through the transamidation of misacylated Asp-tRNA(Asn) or Glu-tRNA(Gln) in organisms which lack either or both of asparaginyl-tRNA or glutaminyl-tRNA synthetases. The reaction takes place in the presence of glutamine and ATP through an activated phospho-Asp-tRNA(Asn) or phospho-Glu-tRNA(Gln). This is Aspartyl/glutamyl-tRNA(Asn/Gln) amidotransferase subunit C from Jannaschia sp. (strain CCS1).